Here is a 156-residue protein sequence, read N- to C-terminus: Transcription antitermination protein NusB (156 aa).

The protein belongs to the NusB family.

Involved in transcription antitermination. Required for transcription of ribosomal RNA (rRNA) genes. Binds specifically to the boxA antiterminator sequence of the ribosomal RNA (rrn) operons. This Vibrio cholerae serotype O1 (strain ATCC 39541 / Classical Ogawa 395 / O395) protein is Transcription antitermination protein NusB.